The chain runs to 158 residues: MASVEKVPMLAEGYEKLTAQLAALKAERPLIVDAIEEARAHGDLSENAEYHAAKERQGQVEATIGDLEDKLSRAQVIDPTTLSGDRIVFGATVTLTDEDDKPVKYQIVGQAEADAKAGKISYNSPLGRALIGRRVDDEIEVTVPSGDKYYLVTKIEFI.

Positions 53–75 (AKERQGQVEATIGDLEDKLSRAQ) form a coiled coil.

Belongs to the GreA/GreB family.

Functionally, necessary for efficient RNA polymerase transcription elongation past template-encoded arresting sites. The arresting sites in DNA have the property of trapping a certain fraction of elongating RNA polymerases that pass through, resulting in locked ternary complexes. Cleavage of the nascent transcript by cleavage factors such as GreA or GreB allows the resumption of elongation from the new 3'terminus. GreA releases sequences of 2 to 3 nucleotides. This Sphingopyxis alaskensis (strain DSM 13593 / LMG 18877 / RB2256) (Sphingomonas alaskensis) protein is Transcription elongation factor GreA.